The chain runs to 225 residues: Respiratory nitrate reductase 1 gamma chain (225 aa).

The residue at position 1 (Met1) is an N-formylmethionine. Residues 1–3 are Periplasmic-facing; the sequence is MQF. A helical membrane pass occupies residues 4–29; the sequence is LNMFFFDIYPYIAGAVFLIGSWLRYD. Topologically, residues 30–47 are cytoplasmic; that stretch reads YGQYTWRAASSQMLDRKG. The helical transmembrane segment at 48–70 threads the bilayer; the sequence is MNLASNLFHIGILGIFVGHFFGM. The heme b site is built by His56 and His66. At 71 to 82 the chain is on the periplasmic side; sequence LTPHWMYEAWLP. Residues 83–112 traverse the membrane as a helical segment; that stretch reads IEVKQKMAMFAGGASGVLCLIGGVLLLKRR. Residues 113-124 are Cytoplasmic-facing; sequence LFSPRVRATTTG. Residues 125–148 traverse the membrane as a helical segment; it reads ADILILSLLVIQCALGLLTIPFSA. Residues 149–182 lie on the Periplasmic side of the membrane; the sequence is QHMDGSEMMKLVGWAQSVVTFHGGASQHLDGVAF. A helical transmembrane segment spans residues 183–198; sequence IFRLHLVLGMTLFLLF. Heme b contacts are provided by His187 and His205. Residues 199–225 lie on the Cytoplasmic side of the membrane; it reads PFSRLIHIWSVPVEYLTRKYQLVRARH.

Dimer of heterotrimers each composed of an alpha, a beta and a gamma chain. Alpha and beta are catalytic chains; gamma chains are involved in binding the enzyme complex to the cytoplasmic membrane. Heme serves as cofactor.

The protein localises to the cell inner membrane. The catalysed reaction is nitrate + a quinol = a quinone + nitrite + H2O. The nitrate reductase enzyme complex allows E.coli to use nitrate as an electron acceptor during anaerobic growth. The gamma chain is a membrane-embedded heme-iron unit resembling cytochrome b, which transfers electrons from quinones to the beta subunit. The sequence is that of Respiratory nitrate reductase 1 gamma chain (narI) from Escherichia coli (strain K12).